Reading from the N-terminus, the 299-residue chain is Small ribosomal subunit protein uS2 (299 aa).

The disordered stretch occupies residues Ala210–Ser299. Polar residues predominate over residues Trp275–Pro285.

The protein belongs to the universal ribosomal protein uS2 family. As to quaternary structure, component of the small ribosomal subunit. Mature ribosomes consist of a small (40S) and a large (60S) subunit. The 40S subunit contains about 33 different proteins and 1 molecule of RNA (18S). The 60S subunit contains about 49 different proteins and 3 molecules of RNA (28S, 5.8S and 5S). Interacts with ribosomal protein S21.

Its subcellular location is the cytoplasm. Functionally, required for the assembly and/or stability of the 40S ribosomal subunit. Required for the processing of the 20S rRNA-precursor to mature 18S rRNA in a late step of the maturation of 40S ribosomal subunits. The polypeptide is Small ribosomal subunit protein uS2 (Ornithodoros parkeri (Soft tick)).